Reading from the N-terminus, the 366-residue chain is uncharacterized protein (366 aa).

The region spanning 64 to 289 (GTVGFIGFPS…LKETMWDYLN (226 aa)) is the OBG-type G domain. GTP contacts are provided by residues 70-77 (GFPSVGKS), 116-120 (DLPGI), and 247-250 (NKID). Residues 289-365 (NLVRVYTRPR…LDEDVVTIVK (77 aa)) enclose the TGS domain.

This sequence belongs to the TRAFAC class OBG-HflX-like GTPase superfamily. OBG GTPase family.

This is an uncharacterized protein from Schizosaccharomyces pombe (strain 972 / ATCC 24843) (Fission yeast).